A 108-amino-acid chain; its full sequence is Thiosulfate sulfurtransferase GlpE (108 aa).

Positions 17–105 (QEKEAVLVDI…WQRQFPAEVA (89 aa)) constitute a Rhodanese domain. C65 acts as the Cysteine persulfide intermediate in catalysis.

The protein belongs to the GlpE family.

It is found in the cytoplasm. It carries out the reaction thiosulfate + hydrogen cyanide = thiocyanate + sulfite + 2 H(+). It catalyses the reaction thiosulfate + [thioredoxin]-dithiol = [thioredoxin]-disulfide + hydrogen sulfide + sulfite + 2 H(+). Its function is as follows. Transferase that catalyzes the transfer of sulfur from thiosulfate to thiophilic acceptors such as cyanide or dithiols. May function in a CysM-independent thiosulfate assimilation pathway by catalyzing the conversion of thiosulfate to sulfite, which can then be used for L-cysteine biosynthesis. The polypeptide is Thiosulfate sulfurtransferase GlpE (Escherichia coli O139:H28 (strain E24377A / ETEC)).